Here is a 381-residue protein sequence, read N- to C-terminus: Queuine tRNA-ribosyltransferase (381 aa).

Residue aspartate 96 is the Proton acceptor of the active site. Residues 96–100, aspartate 150, glutamine 193, and glycine 220 each bind substrate; that span reads DSGGF. An RNA binding region spans residues 251–257; that stretch reads GVGSPDA. The Nucleophile role is filled by aspartate 270. The tract at residues 275 to 279 is RNA binding; important for wobble base 34 recognition; the sequence is TRIAR. Zn(2+)-binding residues include cysteine 308, cysteine 310, cysteine 313, and histidine 339.

Belongs to the queuine tRNA-ribosyltransferase family. As to quaternary structure, homodimer. Within each dimer, one monomer is responsible for RNA recognition and catalysis, while the other monomer binds to the replacement base PreQ1. The cofactor is Zn(2+).

It carries out the reaction 7-aminomethyl-7-carbaguanine + guanosine(34) in tRNA = 7-aminomethyl-7-carbaguanosine(34) in tRNA + guanine. It functions in the pathway tRNA modification; tRNA-queuosine biosynthesis. Functionally, catalyzes the base-exchange of a guanine (G) residue with the queuine precursor 7-aminomethyl-7-deazaguanine (PreQ1) at position 34 (anticodon wobble position) in tRNAs with GU(N) anticodons (tRNA-Asp, -Asn, -His and -Tyr). Catalysis occurs through a double-displacement mechanism. The nucleophile active site attacks the C1' of nucleotide 34 to detach the guanine base from the RNA, forming a covalent enzyme-RNA intermediate. The proton acceptor active site deprotonates the incoming PreQ1, allowing a nucleophilic attack on the C1' of the ribose to form the product. After dissociation, two additional enzymatic reactions on the tRNA convert PreQ1 to queuine (Q), resulting in the hypermodified nucleoside queuosine (7-(((4,5-cis-dihydroxy-2-cyclopenten-1-yl)amino)methyl)-7-deazaguanosine). The polypeptide is Queuine tRNA-ribosyltransferase (Bacillus subtilis (strain 168)).